The sequence spans 87 residues: Beta-toxin Ct17 (87 aa).

Positions 1–19 (MNSLLMITACLVLIGTVWA) are cleaved as a signal peptide. An LCN-type CS-alpha/beta domain is found at 20–85 (KKDGYLVDKT…TWPLPNKRCG (66 aa)). Disulfide bonds link Cys31/Cys84, Cys35/Cys60, Cys44/Cys65, and Cys48/Cys67. Cys84 carries the post-translational modification Cysteine amide.

The protein belongs to the long (4 C-C) scorpion toxin superfamily. Sodium channel inhibitor family. Beta subfamily. In terms of tissue distribution, expressed by the venom gland.

It is found in the secreted. Its function is as follows. Beta toxins bind voltage-independently at site-4 of sodium channels (Nav) and shift the voltage of activation toward more negative potentials thereby affecting sodium channel activation and promoting spontaneous and repetitive firing. Is possibly lethal to mice, freshwater shrimp and crickets. The sequence is that of Beta-toxin Ct17 from Centruroides tecomanus (Scorpion).